A 256-amino-acid polypeptide reads, in one-letter code: MLIVVSPAKTLDYETPVPTTENTQPRFLPQSAELVDILKQKEPWRLSELMGVSDELATLNANRYQSWSLPFNEDNARQALFAFKGDVYTGLDAYSLEQDAISAAQRQLRILSGLYGVLRPLDLMQPYRLEMGTRLQNAKGANLYRFWGDTLTQSLNEEVRETGADVLINLASNEYYKAVNEKKLAVPVITPMFLDMKGGKYKVVSFWAKKARGMMTRYILQNRLQRPEEIKNFDTDGYSYNPALSDGAQWAFTRDH.

Belongs to the UPF0246 family.

This chain is UPF0246 protein HCH_04801, found in Hahella chejuensis (strain KCTC 2396).